Consider the following 467-residue polypeptide: Dimethylamine methyltransferase MtbB2 (467 aa).

Position 356 (O356) is a non-standard amino acid, pyrrolysine.

This sequence belongs to the dimethylamine methyltransferase family.

It carries out the reaction Co(I)-[dimethylamine-specific corrinoid protein] + dimethylamine + H(+) = methyl-Co(III)-[dimethylamine-specific corrinoid protein] + methylamine. It functions in the pathway one-carbon metabolism; methanogenesis from dimethylamine. Catalyzes the transfer of a methyl group from dimethylamine to the corrinoid cofactor of MtbC. This is Dimethylamine methyltransferase MtbB2 (mtbB2) from Methanosarcina barkeri (strain Fusaro / DSM 804).